The following is a 1372-amino-acid chain: DNA-directed RNA polymerase subunit beta (1372 aa).

Belongs to the RNA polymerase beta chain family. The RNAP catalytic core consists of 2 alpha, 1 beta, 1 beta' and 1 omega subunit. When a sigma factor is associated with the core the holoenzyme is formed, which can initiate transcription.

The catalysed reaction is RNA(n) + a ribonucleoside 5'-triphosphate = RNA(n+1) + diphosphate. Its function is as follows. DNA-dependent RNA polymerase catalyzes the transcription of DNA into RNA using the four ribonucleoside triphosphates as substrates. The sequence is that of DNA-directed RNA polymerase subunit beta from Bradyrhizobium diazoefficiens (strain JCM 10833 / BCRC 13528 / IAM 13628 / NBRC 14792 / USDA 110).